Consider the following 102-residue polypeptide: Large ribosomal subunit protein bL21 (102 aa).

The protein belongs to the bacterial ribosomal protein bL21 family. Part of the 50S ribosomal subunit. Contacts protein L20.

In terms of biological role, this protein binds to 23S rRNA in the presence of protein L20. This chain is Large ribosomal subunit protein bL21, found in Lawsonia intracellularis.